The sequence spans 170 residues: Small ribosomal subunit protein uS13m (170 aa).

The interval 130 to 170 is disordered; that stretch reads LKKKPTNRKERRIFNKIKKLQDKHNKQQQKNKKSKKWKTKK. Composition is skewed to basic residues over residues 132–147 and 155–170; these read KKPTNRKERRIFNKIK and KQQQKNKKSKKWKTKK.

The protein belongs to the universal ribosomal protein uS13 family. In terms of assembly, part of the small ribosomal subunit.

It localises to the mitochondrion. Located at the top of the head of the small subunit, it contacts several helices of the small subunit rRNA. The polypeptide is Small ribosomal subunit protein uS13m (mrps13) (Dictyostelium citrinum (Slime mold)).